Here is a 158-residue protein sequence, read N- to C-terminus: NAD(P)H-quinone oxidoreductase subunit J, chloroplastic (158 aa).

It belongs to the complex I 30 kDa subunit family. In terms of assembly, NDH is composed of at least 16 different subunits, 5 of which are encoded in the nucleus.

The protein localises to the plastid. Its subcellular location is the chloroplast thylakoid membrane. The catalysed reaction is a plastoquinone + NADH + (n+1) H(+)(in) = a plastoquinol + NAD(+) + n H(+)(out). The enzyme catalyses a plastoquinone + NADPH + (n+1) H(+)(in) = a plastoquinol + NADP(+) + n H(+)(out). Its function is as follows. NDH shuttles electrons from NAD(P)H:plastoquinone, via FMN and iron-sulfur (Fe-S) centers, to quinones in the photosynthetic chain and possibly in a chloroplast respiratory chain. The immediate electron acceptor for the enzyme in this species is believed to be plastoquinone. Couples the redox reaction to proton translocation, and thus conserves the redox energy in a proton gradient. The protein is NAD(P)H-quinone oxidoreductase subunit J, chloroplastic of Morus indica (Mulberry).